We begin with the raw amino-acid sequence, 457 residues long: Bifunctional protein GlmU (457 aa).

The segment at 1–230 (MSKRYAVVLA…FEESLGVNDR (230 aa)) is pyrophosphorylase. UDP-N-acetyl-alpha-D-glucosamine contacts are provided by residues 9-12 (LAAG), lysine 23, glutamine 73, and 78-79 (GT). Aspartate 103 is a binding site for Mg(2+). UDP-N-acetyl-alpha-D-glucosamine-binding residues include glycine 140, glutamate 155, asparagine 170, and asparagine 228. Asparagine 228 is a binding site for Mg(2+). The tract at residues 231-251 (IALAEASKLMQRRINENHMRN) is linker. Residues 252–457 (GVTLVNPENT…GYAKHLNHGK (206 aa)) form an N-acetyltransferase region. Residues arginine 333 and lysine 351 each contribute to the UDP-N-acetyl-alpha-D-glucosamine site. The active-site Proton acceptor is histidine 363. Tyrosine 366 and asparagine 377 together coordinate UDP-N-acetyl-alpha-D-glucosamine. Acetyl-CoA-binding positions include 386–387 (NY), alanine 423, and arginine 440.

The protein in the N-terminal section; belongs to the N-acetylglucosamine-1-phosphate uridyltransferase family. In the C-terminal section; belongs to the transferase hexapeptide repeat family. As to quaternary structure, homotrimer. It depends on Mg(2+) as a cofactor.

The protein resides in the cytoplasm. It catalyses the reaction alpha-D-glucosamine 1-phosphate + acetyl-CoA = N-acetyl-alpha-D-glucosamine 1-phosphate + CoA + H(+). The catalysed reaction is N-acetyl-alpha-D-glucosamine 1-phosphate + UTP + H(+) = UDP-N-acetyl-alpha-D-glucosamine + diphosphate. It participates in nucleotide-sugar biosynthesis; UDP-N-acetyl-alpha-D-glucosamine biosynthesis; N-acetyl-alpha-D-glucosamine 1-phosphate from alpha-D-glucosamine 6-phosphate (route II): step 2/2. The protein operates within nucleotide-sugar biosynthesis; UDP-N-acetyl-alpha-D-glucosamine biosynthesis; UDP-N-acetyl-alpha-D-glucosamine from N-acetyl-alpha-D-glucosamine 1-phosphate: step 1/1. It functions in the pathway bacterial outer membrane biogenesis; LPS lipid A biosynthesis. Functionally, catalyzes the last two sequential reactions in the de novo biosynthetic pathway for UDP-N-acetylglucosamine (UDP-GlcNAc). The C-terminal domain catalyzes the transfer of acetyl group from acetyl coenzyme A to glucosamine-1-phosphate (GlcN-1-P) to produce N-acetylglucosamine-1-phosphate (GlcNAc-1-P), which is converted into UDP-GlcNAc by the transfer of uridine 5-monophosphate (from uridine 5-triphosphate), a reaction catalyzed by the N-terminal domain. The chain is Bifunctional protein GlmU from Listeria innocua serovar 6a (strain ATCC BAA-680 / CLIP 11262).